The primary structure comprises 162 residues: MLNIVLFEPEIPPNTGNIIRLCANTGFQLHLIQPLGFTWDDKRLRRAGLDYHEFANIKQHHDYHSFLENEGVTGESFARLFALTTKGTPAHSAVSYQAGDYLMFGPETRGLPSYVLDNMPPQQKIRIPMLADSRSMNLSNSVAVVVFEAWRQLGYSGALLKE.

Leucine 83, glycine 105, isoleucine 127, and serine 135 together coordinate S-adenosyl-L-methionine.

This sequence belongs to the class IV-like SAM-binding methyltransferase superfamily. RNA methyltransferase TrmH family. TrmL subfamily. As to quaternary structure, homodimer.

It is found in the cytoplasm. The enzyme catalyses cytidine(34) in tRNA + S-adenosyl-L-methionine = 2'-O-methylcytidine(34) in tRNA + S-adenosyl-L-homocysteine + H(+). It catalyses the reaction 5-carboxymethylaminomethyluridine(34) in tRNA(Leu) + S-adenosyl-L-methionine = 5-carboxymethylaminomethyl-2'-O-methyluridine(34) in tRNA(Leu) + S-adenosyl-L-homocysteine + H(+). Methylates the ribose at the nucleotide 34 wobble position in the two leucyl isoacceptors tRNA(Leu)(CmAA) and tRNA(Leu)(cmnm5UmAA). Catalyzes the methyl transfer from S-adenosyl-L-methionine to the 2'-OH of the wobble nucleotide. This Photorhabdus asymbiotica subsp. asymbiotica (strain ATCC 43949 / 3105-77) (Xenorhabdus luminescens (strain 2)) protein is tRNA (cytidine(34)-2'-O)-methyltransferase.